Reading from the N-terminus, the 1396-residue chain is DNA-directed RNA polymerase subunit beta' (1396 aa).

Zn(2+) contacts are provided by Cys-72, Cys-74, Cys-87, and Cys-90. Positions 463, 465, and 467 each coordinate Mg(2+). Zn(2+) contacts are provided by Cys-814, Cys-889, Cys-896, and Cys-899.

Belongs to the RNA polymerase beta' chain family. In terms of assembly, the RNAP catalytic core consists of 2 alpha, 1 beta, 1 beta' and 1 omega subunit. When a sigma factor is associated with the core the holoenzyme is formed, which can initiate transcription. It depends on Mg(2+) as a cofactor. Requires Zn(2+) as cofactor.

The enzyme catalyses RNA(n) + a ribonucleoside 5'-triphosphate = RNA(n+1) + diphosphate. In terms of biological role, DNA-dependent RNA polymerase catalyzes the transcription of DNA into RNA using the four ribonucleoside triphosphates as substrates. In Chlamydia trachomatis serovar L2b (strain UCH-1/proctitis), this protein is DNA-directed RNA polymerase subunit beta'.